A 108-amino-acid polypeptide reads, in one-letter code: ATP-dependent Clp protease adapter protein ClpS (108 aa).

The protein belongs to the ClpS family. Binds to the N-terminal domain of the chaperone ClpA.

Its function is as follows. Involved in the modulation of the specificity of the ClpAP-mediated ATP-dependent protein degradation. The polypeptide is ATP-dependent Clp protease adapter protein ClpS (Ralstonia pickettii (strain 12J)).